Here is a 249-residue protein sequence, read N- to C-terminus: Syntaxin-10 (249 aa).

Position 2 is an N-acetylserine (Ser2). The Cytoplasmic segment spans residues 2–228; sequence SLEDPFFVVR…VSHMTSDRRQ (227 aa). Positions 41–69 form a coiled coil; it reads EELDWTTNELRNGLRSIEWDLEDLEETIG. A Phosphoserine modification is found at Ser108. Residue Thr110 is modified to Phosphothreonine. 3 positions are modified to phosphoserine: Ser134, Ser140, and Ser143. In terms of domain architecture, t-SNARE coiled-coil homology spans 157-219; it reads QLIMDEQDQQ…DGVLRKLAKV (63 aa). A helical; Anchor for type IV membrane protein membrane pass occupies residues 229 to 249; the sequence is WCAIAVLVGVLLLVLILLFSL.

The protein belongs to the syntaxin family. Interacts with VPS52. Expressed at high levels in heart, skeletal muscle and pancreas.

The protein resides in the golgi apparatus membrane. In terms of biological role, SNARE involved in vesicular transport from the late endosomes to the trans-Golgi network. In Homo sapiens (Human), this protein is Syntaxin-10 (STX10).